A 947-amino-acid polypeptide reads, in one-letter code: Pyruvate, phosphate dikinase 1, chloroplastic (947 aa).

The transit peptide at 1 to 71 (MPSVSRAVCV…PLRAVAAPIP (71 aa)) directs the protein to the chloroplast. Positions 39 to 60 (RHGKPEVAIRSGSGGSARGGHC) are disordered. T527 is modified (phosphothreonine; by PDRP1). H529 (tele-phosphohistidine intermediate) is an active-site residue. Substrate-binding residues include R635, R692, E821, G842, T843, N844, and D845. Residue E821 coordinates Mg(2+). D845 is a binding site for Mg(2+). C907 (proton donor) is an active-site residue.

The protein belongs to the PEP-utilizing enzyme family. Homotetramer. The cofactor is Mg(2+). Post-translationally, phosphorylation of Thr-527 in the dark inactivates the enzyme. Dephosphorylation upon light stimulation reactivates the enzyme. Phosphorylation increases during the first 20 days post-pollination and then remains constant through the 40-day mature seed stage. Reactivation by dephosphorylation during germination is negligible. In terms of tissue distribution, isoform 1 is only expressed in green leaves. Isoform 2 is found in roots, stems, rachis branches, leaf sheaths, green leaves and spikelets. The non-phosphorylated PPDK in mature seeds is endosperm-localized.

Its subcellular location is the plastid. It localises to the chloroplast. The protein resides in the cytoplasm. It carries out the reaction pyruvate + phosphate + ATP = phosphoenolpyruvate + AMP + diphosphate + H(+). Its activity is regulated as follows. Activated by light-induced dephosphorylation. Inhibited by dark-induced phosphorylation. Both reactions are catalyzed by PDRP1. In terms of biological role, formation of phosphoenolpyruvate. The cytoplasmic isoform supports the biosynthetic processes in the nascent endosperm and provides an efficient mechanism for glycolytic ATP synthesis in oxygen depleted tissues. May be involved in regulating the flux of carbon into starch and fatty acids of seeds and in the remobilization of nitrogen reserves in senescing leaves. In Oryza sativa subsp. japonica (Rice), this protein is Pyruvate, phosphate dikinase 1, chloroplastic (PPDK1).